Here is a 734-residue protein sequence, read N- to C-terminus: Photosystem I P700 chlorophyll a apoprotein A2 (734 aa).

The next 8 helical transmembrane spans lie at I46–A69, L135–Q158, L175–I199, I273–Y291, I330–Y353, A369–I395, A417–H439, and F517–V535. Residues C559 and C568 each contribute to the [4Fe-4S] cluster site. 2 helical membrane passes run A575–W596 and L643–I665. Chlorophyll a-binding residues include H654, M662, and Y670. W671 serves as a coordination point for phylloquinone. A helical transmembrane segment spans residues L707 to A727.

The protein belongs to the PsaA/PsaB family. The PsaA/B heterodimer binds the P700 chlorophyll special pair and subsequent electron acceptors. PSI consists of a core antenna complex that captures photons, and an electron transfer chain that converts photonic excitation into a charge separation. The eukaryotic PSI reaction center is composed of at least 11 subunits. P700 is a chlorophyll a/chlorophyll a' dimer, A0 is one or more chlorophyll a, A1 is one or both phylloquinones and FX is a shared 4Fe-4S iron-sulfur center. serves as cofactor.

It localises to the plastid. The protein resides in the chloroplast thylakoid membrane. It carries out the reaction reduced [plastocyanin] + hnu + oxidized [2Fe-2S]-[ferredoxin] = oxidized [plastocyanin] + reduced [2Fe-2S]-[ferredoxin]. Functionally, psaA and PsaB bind P700, the primary electron donor of photosystem I (PSI), as well as the electron acceptors A0, A1 and FX. PSI is a plastocyanin-ferredoxin oxidoreductase, converting photonic excitation into a charge separation, which transfers an electron from the donor P700 chlorophyll pair to the spectroscopically characterized acceptors A0, A1, FX, FA and FB in turn. Oxidized P700 is reduced on the lumenal side of the thylakoid membrane by plastocyanin. This chain is Photosystem I P700 chlorophyll a apoprotein A2, found in Eucalyptus globulus subsp. globulus (Tasmanian blue gum).